A 57-amino-acid polypeptide reads, in one-letter code: Large ribosomal subunit protein bL32 (57 aa).

Belongs to the bacterial ribosomal protein bL32 family.

This is Large ribosomal subunit protein bL32 from Staphylococcus saprophyticus subsp. saprophyticus (strain ATCC 15305 / DSM 20229 / NCIMB 8711 / NCTC 7292 / S-41).